We begin with the raw amino-acid sequence, 291 residues long: Probable S-adenosylmethionine-dependent methyltransferase CRG1 (291 aa).

Belongs to the methyltransferase superfamily.

The protein localises to the cytoplasm. Probable S-adenosylmethionine-dependent methyltransferase which mediates cantharidin resistance. This Saccharomyces cerevisiae (strain ATCC 204508 / S288c) (Baker's yeast) protein is Probable S-adenosylmethionine-dependent methyltransferase CRG1 (CRG1).